The primary structure comprises 828 residues: MQDRNLIDVNLTSEMKTSFIDYAMSVIVARALPDVRDGLKPVHRRILYGMNELGVTPDKPHKKSARITGDVMGKYHPHGDSSIYEAMVRMAQWWSYRHMLVDGHGNFGSMDGDGAAAQRYTEARMSKIALELLRDINKNTVNFQDNYDGSEREPVVLPARFPNLLVNGATGIAVGMATNIPPHNLAESIDAVKMVMEHPDCTTRELMEVIPGPDFPTGALVMGRSGIHRAYDTGKGSIVLRSRTEIETTQTGRERIVVTEFPYGVNKTKVHEHIVRLAQEKRLEGITAVRDESSREGVRFVIEIRREASATVILNNLFKLTSLQTNFSFNMLAIENGVPKILSLRQIIDNYISHQKEVIIRRTRFDKDKAEARAHILEGLLIALDHLDEVIAIIRNSETDVIAQTELMSRFDLSERQSQAILDMRLRRLTGLERDKIQSEYDDLLALIADLSDILAKPERIITIIKEEMDEIKRKYANPRRTELMVGEVLSLEDEDLIEEEDVLITLSNKGYIKRLAQDEFRAQKRGGRGVQGTGVNNDDFVRELVSTSTHDTLLFFTNFGRVYRLKAYEIPEYGRTAKGLPIVNLLKLEDGETIQTIINARKEETAGKSFFFTTKQGIVKRTEVSEFNNIRQNGLRALKLKEGDQLINVLLTSGQDDIIIGTHSGYSVRFNEASIRNMGRSATGVRGVKLREDDRVVGASRIQDNQEVLVITENGFGKRTSATDYPTKGRGGKGIKTANITPKNGQLAGLVTVDGTEDIMVITNKGVIIRTNVANISQTGRATLGVKIMKLDADAKIVTFTLVQPEDSSIAEINTDRENSISKNKDN.

Positions 32-497 constitute a Topo IIA-type catalytic domain; the sequence is LPDVRDGLKP…EVLSLEDEDL (466 aa). Tyrosine 120 acts as the O-(5'-phospho-DNA)-tyrosine intermediate in catalysis. Positions 524–530 match the GyrA-box motif; that stretch reads QKRGGRG.

Belongs to the type II topoisomerase GyrA/ParC subunit family. Heterotetramer, composed of two GyrA and two GyrB chains. In the heterotetramer, GyrA contains the active site tyrosine that forms a transient covalent intermediate with DNA, while GyrB binds cofactors and catalyzes ATP hydrolysis.

The protein localises to the cytoplasm. It catalyses the reaction ATP-dependent breakage, passage and rejoining of double-stranded DNA.. Functionally, a type II topoisomerase that negatively supercoils closed circular double-stranded (ds) DNA in an ATP-dependent manner to modulate DNA topology and maintain chromosomes in an underwound state. Negative supercoiling favors strand separation, and DNA replication, transcription, recombination and repair, all of which involve strand separation. Also able to catalyze the interconversion of other topological isomers of dsDNA rings, including catenanes and knotted rings. Type II topoisomerases break and join 2 DNA strands simultaneously in an ATP-dependent manner. This is DNA gyrase subunit A from Streptococcus pyogenes serotype M3 (strain ATCC BAA-595 / MGAS315).